The following is a 151-amino-acid chain: Large ribosomal subunit protein uL16 (151 aa).

Belongs to the universal ribosomal protein uL16 family. As to quaternary structure, part of the 50S ribosomal subunit.

Binds 23S rRNA and is also seen to make contacts with the A and possibly P site tRNAs. This is Large ribosomal subunit protein uL16 from Chloroflexus aurantiacus (strain ATCC 29364 / DSM 637 / Y-400-fl).